The sequence spans 311 residues: Probable cell division protein WhiA (311 aa).

A DNA-binding region (H-T-H motif) is located at residues 274-308 (SLKELGEMIPSGAISKSGINHRIRKINEFAEKLRE).

The protein belongs to the WhiA family.

Functionally, involved in cell division and chromosome segregation. In Enterococcus faecalis (strain ATCC 700802 / V583), this protein is Probable cell division protein WhiA.